Consider the following 607-residue polypeptide: Elongation factor 4 (607 aa).

In terms of domain architecture, tr-type G spans 11–193 (ENIRNFSIIA…KIVDVVPAPD (183 aa)). Residues 23–28 (DHGKST) and 140–143 (NKID) each bind GTP.

It belongs to the TRAFAC class translation factor GTPase superfamily. Classic translation factor GTPase family. LepA subfamily.

The protein resides in the cell membrane. It carries out the reaction GTP + H2O = GDP + phosphate + H(+). In terms of biological role, required for accurate and efficient protein synthesis under certain stress conditions. May act as a fidelity factor of the translation reaction, by catalyzing a one-codon backward translocation of tRNAs on improperly translocated ribosomes. Back-translocation proceeds from a post-translocation (POST) complex to a pre-translocation (PRE) complex, thus giving elongation factor G a second chance to translocate the tRNAs correctly. Binds to ribosomes in a GTP-dependent manner. This Staphylococcus epidermidis (strain ATCC 35984 / DSM 28319 / BCRC 17069 / CCUG 31568 / BM 3577 / RP62A) protein is Elongation factor 4.